Reading from the N-terminus, the 339-residue chain is Glucokinase (339 aa).

16-21 (GDIGGT) contacts ATP.

Belongs to the bacterial glucokinase family.

The protein localises to the cytoplasm. The enzyme catalyses D-glucose + ATP = D-glucose 6-phosphate + ADP + H(+). This is Glucokinase from Pseudomonas paraeruginosa (strain DSM 24068 / PA7) (Pseudomonas aeruginosa (strain PA7)).